We begin with the raw amino-acid sequence, 33 residues long: Phospholipase A2 homolog BmarPLA2 (33 aa).

The protein belongs to the phospholipase A2 family. Group II subfamily. K49 sub-subfamily. As to quaternary structure, homodimer; non-covalently linked. In terms of tissue distribution, expressed by the venom gland.

The protein localises to the secreted. In terms of biological role, snake phospholipase A2 homolog that lacks enzymatic activity. May display myotoxin activity. In isolated heart decreases cardiac frequency. Also decreases mean arterial pressure. Does not show antimicrobial activity. Does not change renal parameters (such as perfusion pressure, renal vascular resistance, urinary flow, glomerular filtration rate and sodium tubular transport). The polypeptide is Phospholipase A2 homolog BmarPLA2 (Bothrops marajoensis (Marajo lancehead)).